The following is a 122-amino-acid chain: Small ribosomal subunit protein uS13 (122 aa).

The interval 95–122 (SLPCRGQRTSTNARTRKGPKRAAVKKKK) is disordered. Positions 108-122 (RTRKGPKRAAVKKKK) are enriched in basic residues.

This sequence belongs to the universal ribosomal protein uS13 family. Part of the 30S ribosomal subunit. Forms a loose heterodimer with protein S19. Forms two bridges to the 50S subunit in the 70S ribosome.

Its function is as follows. Located at the top of the head of the 30S subunit, it contacts several helices of the 16S rRNA. In the 70S ribosome it contacts the 23S rRNA (bridge B1a) and protein L5 of the 50S subunit (bridge B1b), connecting the 2 subunits; these bridges are implicated in subunit movement. Contacts the tRNAs in the A and P-sites. The polypeptide is Small ribosomal subunit protein uS13 (Desulforapulum autotrophicum (strain ATCC 43914 / DSM 3382 / VKM B-1955 / HRM2) (Desulfobacterium autotrophicum)).